The sequence spans 341 residues: MASDLKSKFLHVYQTLKSELLNDPAFEFHHDSRQWIDKMLDYNVPGGKLNRGLSVVDSYQLLKGAELTDDEIFLASALGWCIEWLQAYFLVLDDIMDGSHTRRGQPCWFRLPKVGMIAANDGLILRNHVPRILKKHFRGKPYYVDLVDLFNEVEFQTASGQMIDLITTLVGEKDLSKYSLSIHRRIVQYKTAYYSFYLPVACALLMFGEDLDNHVEVKNVLVEMGTYFQVQDDYLDCFGAPEVIGKIGTDIEDFSSWLVVKALELANEEQKKVLHENYGKKDPSSVAKVKELYNTLNLQGVFEDYESTSYKKLITSIEGHPSKAVQAVLKSFLGKIYKRQK.

Residues lysine 48, arginine 51, and glutamine 86 each coordinate isopentenyl diphosphate. Residues aspartate 93 and aspartate 97 each contribute to the Mg(2+) site. Arginine 102 lines the dimethylallyl diphosphate pocket. Residue arginine 103 participates in isopentenyl diphosphate binding. Positions 190, 191, 229, and 246 each coordinate dimethylallyl diphosphate.

Belongs to the FPP/GGPP synthase family. The cofactor is Mg(2+).

Its subcellular location is the cytoplasm. It catalyses the reaction isopentenyl diphosphate + dimethylallyl diphosphate = (2E)-geranyl diphosphate + diphosphate. The catalysed reaction is isopentenyl diphosphate + (2E)-geranyl diphosphate = (2E,6E)-farnesyl diphosphate + diphosphate. Its pathway is isoprenoid biosynthesis; farnesyl diphosphate biosynthesis; farnesyl diphosphate from geranyl diphosphate and isopentenyl diphosphate: step 1/1. The protein operates within isoprenoid biosynthesis; geranyl diphosphate biosynthesis; geranyl diphosphate from dimethylallyl diphosphate and isopentenyl diphosphate: step 1/1. Catalyzes the sequential condensation of isopentenyl pyrophosphate with the allylic pyrophosphates, dimethylallyl pyrophosphate, and then with the resultant geranylpyrophosphate to the ultimate product farnesyl pyrophosphate. The polypeptide is Farnesyl pyrophosphate synthase (FPS1) (Helianthus annuus (Common sunflower)).